Here is a 1025-residue protein sequence, read N- to C-terminus: Dihydropyrimidine dehydrogenase [NADP(+)] (1025 aa).

The region spanning 69–100 (ERGALREAVRCLKCADAPCQKSCPTSLDIKSF) is the 4Fe-4S ferredoxin-type 1 domain. The [4Fe-4S] cluster site is built by C79, C82, C87, and C91. FAD is bound at residue V129. 4 residues coordinate [4Fe-4S] cluster: C130, C136, C140, and Q156. Residues 194–198 (GAGPA), 218–226 (EKQEYVGGL), and R235 contribute to the FAD site. NADP(+) contacts are provided by residues 340–343 (AGDT), 364–365 (RK), and R371. Residue K384 is modified to N6-acetyllysine. NADP(+) contacts are provided by residues 437-439 (PFG) and 481-487 (DVVGMAN). An FAD-binding site is contributed by 480-489 (GDVVGMANTT). FMN contacts are provided by residues S550 and 574–575 (KT). Substrate contacts are provided by residues N609 and 668–670 (NLS). C671 functions as the Proton acceptor in the catalytic mechanism. K709 is a binding site for FMN. 736–737 (NT) serves as a coordination point for substrate. FMN is bound by residues G767, 793-795 (TGG), and 816-817 (CS). S905 is subject to Phosphoserine. 2 consecutive 4Fe-4S ferredoxin-type domains span residues 944–976 (VVAL…FDPE) and 978–1007 (HLPT…MVSR). Positions 953, 956, 959, 963, 986, 989, 992, and 996 each coordinate [4Fe-4S] cluster.

Belongs to the dihydropyrimidine dehydrogenase family. As to quaternary structure, homodimer. FAD serves as cofactor. FMN is required as a cofactor. The cofactor is [4Fe-4S] cluster.

The protein localises to the cytoplasm. It catalyses the reaction 5,6-dihydrouracil + NADP(+) = uracil + NADPH + H(+). The catalysed reaction is 5,6-dihydrothymine + NADP(+) = thymine + NADPH + H(+). Its pathway is amino-acid biosynthesis; beta-alanine biosynthesis. Its activity is regulated as follows. Inactivated by 5-iodouracil. Its function is as follows. Involved in pyrimidine base degradation. Catalyzes the reduction of uracil and thymine. Also involved the degradation of the chemotherapeutic drug 5-fluorouracil. The polypeptide is Dihydropyrimidine dehydrogenase [NADP(+)] (Rattus norvegicus (Rat)).